A 491-amino-acid chain; its full sequence is N-succinylglutamate 5-semialdehyde dehydrogenase (491 aa).

Position 225–230 (225–230) interacts with NAD(+); the sequence is GSSTVG. Catalysis depends on residues glutamate 248 and cysteine 282.

This sequence belongs to the aldehyde dehydrogenase family. AstD subfamily.

It carries out the reaction N-succinyl-L-glutamate 5-semialdehyde + NAD(+) + H2O = N-succinyl-L-glutamate + NADH + 2 H(+). It functions in the pathway amino-acid degradation; L-arginine degradation via AST pathway; L-glutamate and succinate from L-arginine: step 4/5. In terms of biological role, catalyzes the NAD-dependent reduction of succinylglutamate semialdehyde into succinylglutamate. This Marinobacter nauticus (strain ATCC 700491 / DSM 11845 / VT8) (Marinobacter aquaeolei) protein is N-succinylglutamate 5-semialdehyde dehydrogenase.